We begin with the raw amino-acid sequence, 187 residues long: Dihydrofolate reductase (187 aa).

One can recognise a DHFR domain in the interval 4–185 (PLNCIVAVSQ…IKYKFEVYEK (182 aa)). The segment at 8 to 37 (IVAVSQNMGIGKNGDFPWPMLRNEFKYFQR) is involved in methotrexate binding. NADP(+)-binding positions include Ala10 and 16-22 (GIGKNGD). A substrate-binding site is contributed by 31 to 36 (EFKYFQ). At Lys33 the chain carries N6-acetyllysine; alternate. Lys33 is modified (N6-succinyllysine; alternate). NADP(+) is bound at residue 55–57 (RKT). An involved in methotrexate binding region spans residues 60-70 (SIPEKNRPLKD). Arg71 lines the substrate pocket. NADP(+) is bound by residues 77-79 (SRE) and 117-124 (GGSSVYKE). Residue Thr137 participates in methotrexate binding.

It belongs to the dihydrofolate reductase family. Homodimer.

It is found in the mitochondrion. Its subcellular location is the cytoplasm. It catalyses the reaction (6S)-5,6,7,8-tetrahydrofolate + NADP(+) = 7,8-dihydrofolate + NADPH + H(+). It participates in cofactor biosynthesis; tetrahydrofolate biosynthesis; 5,6,7,8-tetrahydrofolate from 7,8-dihydrofolate: step 1/1. In terms of biological role, key enzyme in folate metabolism. Contributes to the de novo mitochondrial thymidylate biosynthesis pathway. Catalyzes an essential reaction for de novo glycine and purine synthesis, and for DNA precursor synthesis. Binds its own mRNA. This Mesocricetus auratus (Golden hamster) protein is Dihydrofolate reductase (DHFR).